Reading from the N-terminus, the 1438-residue chain is DNA-directed RNA polymerase subunit beta' (1438 aa).

Zn(2+) is bound by residues cysteine 70, cysteine 72, cysteine 85, and cysteine 88. Mg(2+)-binding residues include aspartate 461, aspartate 463, and aspartate 465. The Zn(2+) site is built by cysteine 821, cysteine 895, cysteine 902, and cysteine 905. A compositionally biased stretch (low complexity) spans 1413–1427 (DAMAAAMGGDSAGGD). Residues 1413-1438 (DAMAAAMGGDSAGGDTKPEAPEASEE) form a disordered region.

This sequence belongs to the RNA polymerase beta' chain family. In terms of assembly, the RNAP catalytic core consists of 2 alpha, 1 beta, 1 beta' and 1 omega subunit. When a sigma factor is associated with the core the holoenzyme is formed, which can initiate transcription. Requires Mg(2+) as cofactor. The cofactor is Zn(2+).

The catalysed reaction is RNA(n) + a ribonucleoside 5'-triphosphate = RNA(n+1) + diphosphate. Functionally, DNA-dependent RNA polymerase catalyzes the transcription of DNA into RNA using the four ribonucleoside triphosphates as substrates. The protein is DNA-directed RNA polymerase subunit beta' of Erythrobacter litoralis (strain HTCC2594).